The chain runs to 281 residues: Putative phosphatase/phosphodiesterase MG246 (281 aa).

Fe cation-binding residues include aspartate 11, glutamate 42, asparagine 43, and asparagine 70. Histidine 71 (proton donor) is an active-site residue. Residues histidine 157, histidine 182, and histidine 184 each coordinate Fe cation.

It belongs to the YmdB-like family. The cofactor is Fe(3+).

The protein is Putative phosphatase/phosphodiesterase MG246 of Mycoplasma genitalium (strain ATCC 33530 / DSM 19775 / NCTC 10195 / G37) (Mycoplasmoides genitalium).